Consider the following 274-residue polypeptide: Undecaprenyl-diphosphatase (274 aa).

8 consecutive transmembrane segments (helical) span residues Met1–Ile21, Val48–Gly68, Leu84–Ile104, Leu108–Ile128, Ile143–Gly163, Phe187–Ser207, Ile214–Ile234, and Val254–Leu274.

This sequence belongs to the UppP family.

It localises to the cell membrane. The enzyme catalyses di-trans,octa-cis-undecaprenyl diphosphate + H2O = di-trans,octa-cis-undecaprenyl phosphate + phosphate + H(+). Catalyzes the dephosphorylation of undecaprenyl diphosphate (UPP). Confers resistance to bacitracin. This chain is Undecaprenyl-diphosphatase, found in Deinococcus geothermalis (strain DSM 11300 / CIP 105573 / AG-3a).